The primary structure comprises 429 residues: Glycine betaine monooxygenase oxygenase subunit (429 aa).

The Rieske domain maps to 56–163; the sequence is WLIAGMTCEI…VKTAGGYIFI (108 aa). Residues C98, H100, C118, and H121 each contribute to the [2Fe-2S] cluster site. Fe cation is bound by residues H217 and H222.

The protein belongs to the bacterial ring-hydroxylating dioxygenase alpha subunit family. The system is composed of an oxygenase subunit (GbcA) and a reductase subunit (GbcB). [2Fe-2S] cluster is required as a cofactor. It depends on Fe cation as a cofactor.

The catalysed reaction is glycine betaine + NADH + O2 + H(+) = N,N-dimethylglycine + formaldehyde + NAD(+) + H2O. Functionally, involved in degradation of glycine betaine. Part of a Rieske-type oxygenase system that catalyzes the conversion of glycine betaine (GB) to dimethylglycine (DMG). This subunit is the terminal oxygenase component of the system. Required for growth on choline and GB, but not for growth on DMG. The protein is Glycine betaine monooxygenase oxygenase subunit of Pseudomonas aeruginosa (strain ATCC 15692 / DSM 22644 / CIP 104116 / JCM 14847 / LMG 12228 / 1C / PRS 101 / PAO1).